Reading from the N-terminus, the 808-residue chain is Receptor like protein 27 (808 aa).

A signal peptide spans 1 to 31 (MLFFIKVFMKTILSVLLLFFIFASSFTLVVG). Topologically, residues 32-740 (LAGCRPDQIQ…DEDEEVLNWK (709 aa)) are extracellular. Residues asparagine 56, asparagine 68, asparagine 90, asparagine 103, asparagine 108, asparagine 144, and asparagine 167 are each glycosylated (N-linked (GlcNAc...) asparagine). 12 LRR repeats span residues 96–120 (LQHL…GFGN), 122–144 (NRLE…SFSN), 145–170 (LSQL…NLTK), 172–192 (SILV…LLTL), 193–218 (PFLS…STSS), 220–241 (LEFM…ISKL), 242–265 (INLK…LFSS), 266–291 (FKSL…SKIP), 293–314 (NLEN…LKNL), 315–338 (TKLE…FWNL), 340–363 (RLRR…VLVN), and 364–387 (SSVR…PLSI). N-linked (GlcNAc...) asparagine glycosylation is present at asparagine 213. Residue asparagine 313 is glycosylated (N-linked (GlcNAc...) asparagine). N-linked (GlcNAc...) asparagine glycosylation occurs at asparagine 363. The LRR 13; degenerate repeat unit spans residues 388–407 (NLLSAWNNSFTGNIPLETCN). Asparagine 394, asparagine 407, and asparagine 420 each carry an N-linked (GlcNAc...) asparagine glycan. LRR repeat units lie at residues 408–434 (RSSL…DFQE), 436–456 (LIVV…IFSD), 457–481 (GALL…LLNC), 483–504 (MLRF…WLKA), 505–529 (LPDL…DRGP), 532–556 (FPKL…YFVN), 601–625 (LTSY…IGLL), 626–649 (KALI…LANV), 650–673 (TELE…LKTL), and 675–698 (FLAY…QITG). A glycan (N-linked (GlcNAc...) asparagine) is linked at asparagine 480. A glycan (N-linked (GlcNAc...) asparagine) is linked at asparagine 544. N-linked (GlcNAc...) asparagine glycans are attached at residues asparagine 632 and asparagine 648. A helical membrane pass occupies residues 741-761 (AVVIGYWPGLLLGLIMAHVIA). Over 762 to 808 (SFKPKWLVKIVGPEKRKEDNPVRLFMTLDSRWDSFNNKKNVEQKSDM) the chain is Cytoplasmic.

It belongs to the RLP family.

The protein localises to the cell membrane. The polypeptide is Receptor like protein 27 (Arabidopsis thaliana (Mouse-ear cress)).